Consider the following 642-residue polypeptide: Threonine--tRNA ligase (642 aa).

A TGS domain is found at 1 to 61 (MPVITLPDGS…SEDANLVIFT (61 aa)). The segment at 243-534 (DHRKLAKKFD…LIEHYEGSFP (292 aa)) is catalytic. Residues Cys-334, His-385, and His-511 each contribute to the Zn(2+) site.

The protein belongs to the class-II aminoacyl-tRNA synthetase family. As to quaternary structure, homodimer. It depends on Zn(2+) as a cofactor.

The protein localises to the cytoplasm. It catalyses the reaction tRNA(Thr) + L-threonine + ATP = L-threonyl-tRNA(Thr) + AMP + diphosphate + H(+). Catalyzes the attachment of threonine to tRNA(Thr) in a two-step reaction: L-threonine is first activated by ATP to form Thr-AMP and then transferred to the acceptor end of tRNA(Thr). Also edits incorrectly charged L-seryl-tRNA(Thr). This Cellvibrio japonicus (strain Ueda107) (Pseudomonas fluorescens subsp. cellulosa) protein is Threonine--tRNA ligase.